The primary structure comprises 421 residues: AP-3 complex subunit mu (421 aa).

The region spanning 178–420 is the MHD domain; the sequence is QNKIFFDIIE…TTKAGKFQVR (243 aa).

This sequence belongs to the adaptor complexes medium subunit family. As to quaternary structure, adaptor protein complex 3 (AP-3) is a heterotetramer composed of two large adaptins (delta-type subunit and beta-type subunit), a medium adaptin (mu-type subunit) and a small adaptin (sigma-type subunit).

It localises to the endosome membrane. Functionally, part of the AP-3 complex, an adaptor-related complex which is essential for the compartmentalization of the endocytic pathway. This is AP-3 complex subunit mu (apm3) from Dictyostelium discoideum (Social amoeba).